Here is a 367-residue protein sequence, read N- to C-terminus: MKLENKKGYLYLEDGTFIEGYSFGAKGIKVGEVVFTTSMNGYVESLTDPSYKGQILIITHPLVGNYGVPEKKYEQGILTNFESERIQVEGLIVAEHTYPSKWNSALTLDEWLKSENVPGVFDVDTRMIVKKIRTYGTMMGIIASELEIDDPRKYLEKKYDEIDFTQFTSPKSPIFHPNTGDMIVVVDCGIKHGILYGLYKRGFSIVRVPCSFSASKIIEYNPKGIVFSNGPGNPNLLENQIKTFSELVEYKIPILGICLGHQIATLALGGKIKKMKFGHRAINKPVIESNSNKCYISTHNHGYGIISKNDIPPNTKIWFYNPDDYTIEGLIHEKLPIITTQFHPEARPGPWDTTWVFDKFRTMVTGK.

Residues 1 to 182 (MKLENKKGYL…PIFHPNTGDM (182 aa)) are CPSase. L-glutamine contacts are provided by Ser50, Gly230, and Gly232. In terms of domain architecture, Glutamine amidotransferase type-1 spans 182-367 (MIVVVDCGIK…DKFRTMVTGK (186 aa)). Residue Cys258 is the Nucleophile of the active site. The L-glutamine site is built by Leu259, Gln262, Asn300, Gly302, and Tyr303. Active-site residues include His343 and Glu345.

It belongs to the CarA family. In terms of assembly, composed of two chains; the small (or glutamine) chain promotes the hydrolysis of glutamine to ammonia, which is used by the large (or ammonia) chain to synthesize carbamoyl phosphate. Tetramer of heterodimers (alpha,beta)4.

It carries out the reaction hydrogencarbonate + L-glutamine + 2 ATP + H2O = carbamoyl phosphate + L-glutamate + 2 ADP + phosphate + 2 H(+). The catalysed reaction is L-glutamine + H2O = L-glutamate + NH4(+). It participates in amino-acid biosynthesis; L-arginine biosynthesis; carbamoyl phosphate from bicarbonate: step 1/1. It functions in the pathway pyrimidine metabolism; UMP biosynthesis via de novo pathway; (S)-dihydroorotate from bicarbonate: step 1/3. Functionally, small subunit of the glutamine-dependent carbamoyl phosphate synthetase (CPSase). CPSase catalyzes the formation of carbamoyl phosphate from the ammonia moiety of glutamine, carbonate, and phosphate donated by ATP, constituting the first step of 2 biosynthetic pathways, one leading to arginine and/or urea and the other to pyrimidine nucleotides. The small subunit (glutamine amidotransferase) binds and cleaves glutamine to supply the large subunit with the substrate ammonia. The sequence is that of Carbamoyl phosphate synthase small chain from Saccharolobus solfataricus (strain ATCC 35092 / DSM 1617 / JCM 11322 / P2) (Sulfolobus solfataricus).